Reading from the N-terminus, the 80-residue chain is Metallothionein-like protein type 2, MT2-4/MT2-25 (80 aa).

Belongs to the metallothionein superfamily. Type 15 family.

Metallothioneins have a high content of cysteine residues that bind various heavy metals. In Brassica juncea (Indian mustard), this protein is Metallothionein-like protein type 2, MT2-4/MT2-25.